The sequence spans 999 residues: Sarcoplasmic/endoplasmic reticulum calcium ATPase 3 (999 aa).

Met-1 is subject to N-acetylmethionine. Over 1 to 48 the chain is Cytoplasmic; the sequence is MEEAHLLSAADVLRRFSVTAEGGLTLEQVTDARERYGPNELPTEEGKS. Position 17 is a phosphoserine (Ser-17). Phosphothreonine is present on Thr-19. A helical transmembrane segment spans residues 49 to 69; sequence LWELVVEQFEDLLVRILLLAA. Residues 70 to 89 lie on the Lumenal side of the membrane; sequence LVSFVLAWFEEGEETTTAFV. Residues 90-110 traverse the membrane as a helical segment; sequence EPLVIMLILVANAIVGVWQER. The Cytoplasmic portion of the chain corresponds to 111-253; the sequence is NAESAIEALK…PERTPLQRKL (143 aa). A helical membrane pass occupies residues 254–273; sequence DEFGRQLSHAISVICVAVWV. The Lumenal segment spans residues 274-295; it reads INIGHFADPAHGGSWLRGAVYY. A helical transmembrane segment spans residues 296 to 313; that stretch reads FKIAVALAVAAIPEGLPA. 4 residues coordinate Ca(2+): Val-304, Ala-305, Ile-307, and Glu-309. The Cytoplasmic portion of the chain corresponds to 314 to 757; sequence VITTCLALGT…EEGRAIYNNM (444 aa). Asp-351 (4-aspartylphosphate intermediate) is an active-site residue. Residues Asp-351 and Thr-353 each coordinate Mg(2+). Thr-353 provides a ligand contact to ATP. The interaction with phospholamban 1 stretch occupies residues 370-400; it reads AEAEAGACRLHEFTISGTTYTPEGEVRQGEQ. The residue at position 415 (Thr-415) is a Phosphothreonine. ATP-binding residues include Glu-442, Arg-489, Lys-515, Arg-560, Thr-625, Gly-626, and Asp-627. Ser-662 carries the phosphoserine modification. Arg-678 and Lys-684 together coordinate ATP. Residue Asp-703 coordinates Mg(2+). An ATP-binding site is contributed by Asn-706. The helical transmembrane segment at 758 to 777 threads the bilayer; sequence KQFIRYLISSNVGEVVCIFL. Residues Asn-768 and Glu-771 each coordinate Ca(2+). At 778 to 787 the chain is on the lumenal side; sequence TAILGLPEAL. A helical membrane pass occupies residues 788 to 808; that stretch reads IPVQLLWVNLVTDGLPATALG. Residues 788–808 are interaction with phospholamban 2; the sequence is IPVQLLWVNLVTDGLPATALG. Residues Asn-796, Thr-799, and Asp-800 each contribute to the Ca(2+) site. The Cytoplasmic portion of the chain corresponds to 809-828; sequence FNPPDLDIMEKLPRNPREAL. A helical membrane pass occupies residues 829 to 851; sequence ISGWLFFRYLAIGVYVGLATVAA. Residues 852–897 are Lumenal-facing; the sequence is ATWWFLYDAEGPQVTFHQLRNFLKCSEDNPLFAGIDCEVFESRFPT. Residues 898-917 form a helical membrane-spanning segment; that stretch reads TMALSVLVTIEMCNALNSVS. Glu-908 contributes to the Ca(2+) binding site. At 918–930 the chain is on the cytoplasmic side; the sequence is ENQSLLRMPPWLN. Residues 931–949 traverse the membrane as a helical segment; it reads PWLLGAVVMSMALHFLILL. The Lumenal segment spans residues 950-964; sequence VPPLPLIFQVTPLSG. Residues 965–985 traverse the membrane as a helical segment; sequence RQWGVVLQMSLPVILLDEALK. Residues 986 to 999 lie on the Cytoplasmic side of the membrane; sequence YLSRHHVDEKKDLK.

Belongs to the cation transport ATPase (P-type) (TC 3.A.3) family. Type IIA subfamily. As to quaternary structure, interacts with sarcolipin (SLN). Interacts with phospholamban (PLN). Interacts with myoregulin (MRLN). Interacts with DWORF. Interacts with VMP1. Interacts with TUNAR; the interaction occurs at low levels in low glucose conditions and is increased by high glucose levels. Mg(2+) is required as a cofactor. Found in most tissues. Most abundant in large and small intestine, spleen and lung. Also detected in PC12 cells.

It localises to the endoplasmic reticulum membrane. Its subcellular location is the sarcoplasmic reticulum membrane. The catalysed reaction is Ca(2+)(in) + ATP + H2O = Ca(2+)(out) + ADP + phosphate + H(+). Inhibited by sarcolipin (SLN), phospholamban (PLN) and myoregulin (MRLN). Enhanced by DWORF; DWORF increases activity by displacing sarcolipin (SLN), phospholamban (PLN) and myoregulin (MRLN). Functionally, this magnesium-dependent enzyme catalyzes the hydrolysis of ATP coupled with the transport of the calcium. Transports calcium ions from the cytosol into the sarcoplasmic/endoplasmic reticulum lumen. Contributes to calcium sequestration involved in muscular excitation/contraction. Its function is as follows. This magnesium-dependent enzyme catalyzes the hydrolysis of ATP coupled with the transport of calcium. Transports calcium ions from the cytosol into the sarcoplasmic/endoplasmic reticulum lumen. Contributes to calcium sequestration involved in muscular excitation/contraction. The sequence is that of Sarcoplasmic/endoplasmic reticulum calcium ATPase 3 (Atp2a3) from Rattus norvegicus (Rat).